Here is an 859-residue protein sequence, read N- to C-terminus: Sulfate permease 1 (859 aa).

N-linked (GlcNAc...) asparagine glycosylation is found at Asn51 and Asn93. A run of 8 helical transmembrane segments spans residues 94–114 (LTAK…KWFP), 116–136 (YNFT…CVLV), 148–168 (LSPE…SLFA), 173–193 (VCIG…AEVL), 206–226 (PIIA…LGIL), 234–254 (LISL…IIWG), 292–312 (FGLI…TFGI), and 332–352 (FYFY…TAIS). Residues Asn358 and Asn391 are each glycosylated (N-linked (GlcNAc...) asparagine). 4 helical membrane-spanning segments follow: residues 395–415 (EIPA…KSFG), 428–448 (LIAI…PATG), 468–488 (VFTG…FFFI), and 525–545 (FIVT…YFAM). N-linked (GlcNAc...) asparagine glycosylation is found at Asn630, Asn653, and Asn718. Residues 630–808 (NTTVRPPPPG…SIIAGHSSFH (179 aa)) enclose the STAS domain.

The protein belongs to the SLC26A/SulP transporter (TC 2.A.53) family.

It localises to the membrane. In terms of biological role, high affinity uptake of sulfate into the cell. This is Sulfate permease 1 (SUL1) from Saccharomyces cerevisiae (strain ATCC 204508 / S288c) (Baker's yeast).